We begin with the raw amino-acid sequence, 272 residues long: Indole-3-glycerol phosphate synthase (272 aa).

The protein belongs to the TrpC family.

It carries out the reaction 1-(2-carboxyphenylamino)-1-deoxy-D-ribulose 5-phosphate + H(+) = (1S,2R)-1-C-(indol-3-yl)glycerol 3-phosphate + CO2 + H2O. The protein operates within amino-acid biosynthesis; L-tryptophan biosynthesis; L-tryptophan from chorismate: step 4/5. This is Indole-3-glycerol phosphate synthase from Paenarthrobacter aurescens (strain TC1).